The sequence spans 827 residues: Transcription factor SOX-6 (827 aa).

The span at 1 to 10 (MSSKQATSPF) shows a compositional bias: polar residues. The segment at 1–51 (MSSKQATSPFACTADGEEAMTQDLTSREKEEGSDQHPASHLPLHPIMHNKP) is disordered. Positions 25–34 (TSREKEEGSD) are enriched in basic and acidic residues. The residue at position 119 (Thr-119) is a Phosphothreonine. Residues 184–262 (LAEKERQLST…LLQQQIQVQG (79 aa)) are a coiled coil. Disordered regions lie at residues 334–361 (QINP…GHSY) and 379–470 (VSPG…PIGG). Residues 341-357 (GISDRFGRNLDPSEHGG) show a composition bias toward basic and acidic residues. Ser-399 is subject to Phosphoserine. At Thr-401 the chain carries Phosphothreonine. Glycyl lysine isopeptide (Lys-Gly) (interchain with G-Cter in SUMO) cross-links involve residues Lys-404 and Lys-417. Composition is skewed to polar residues over residues 421–431 (TAQPLNLSSRP) and 439–461 (SPTS…LPNK). Phosphoserine is present on residues Ser-439 and Ser-442. A DNA-binding region (HMG box) is located at residues 620–688 (IKRPMNAFMV…IHLEKYPNYK (69 aa)). 2 disordered regions span residues 752-772 (TPSP…EPSL) and 786-827 (ASLA…VSAN). Residues 795 to 808 (NGEDEMEAYDDYED) show a composition bias toward acidic residues.

As to quaternary structure, homodimer. Interacts with DAZAP2. May interact with CENPK. Sumoylation inhibits the transcriptional activity. As to expression, highly expressed in testis.

The protein resides in the nucleus. It localises to the cytoplasm. Functionally, transcription factor that plays a key role in several developmental processes, including neurogenesis, chondrocytes differentiation and cartilage formation. Specifically binds the 5'-AACAAT-3' DNA motif present in enhancers and super-enhancers and promotes expression of genes important for chondrogenesis. Required for overt chondrogenesis when condensed prechondrocytes differentiate into early stage chondrocytes: SOX5 and SOX6 cooperatively bind with SOX9 on active enhancers and super-enhancers associated with cartilage-specific genes, and thereby potentiate SOX9's ability to transactivate. Not involved in precartilaginous condensation, the first step in chondrogenesis, during which skeletal progenitors differentiate into prechondrocytes. Together with SOX5, required to form and maintain a pool of highly proliferating chondroblasts between epiphyses and metaphyses, to form columnar chondroblasts, delay chondrocyte prehypertrophy but promote hypertrophy, and to delay terminal differentiation of chondrocytes on contact with ossification fronts. Binds to the proximal promoter region of the myelin protein MPZ gene, and is thereby involved in the differentiation of oligodendroglia in the developing spinal tube. Binds to the gene promoter of MBP and acts as a transcriptional repressor. This is Transcription factor SOX-6 from Mus musculus (Mouse).